Consider the following 906-residue polypeptide: Cadherin-2A (906 aa).

The N-terminal stretch at 1–28 (MCRKEPFLLPTALCILAALVLHQGPVEA) is a signal peptide. The propeptide occupies 29–160 (LGGSRLCKTG…KHNGLQRQKR (132 aa)). Cadherin domains lie at 161–268 (DWVI…RPEF), 269–383 (LHQI…PPEF), 384–498 (TAMT…NPYF), 499–604 (TPNP…DNAP), and 605–714 (YVYP…TTAP). The Extracellular portion of the chain corresponds to 161-724 (DWVIPPINVP…IIGTGLGTGA (564 aa)). Residues glutamate 171, aspartate 227, glutamate 229, aspartate 260, methionine 261, asparagine 262, aspartate 263, and asparagine 264 each contribute to the Ca(2+) site. Residue asparagine 274 is glycosylated (N-linked (GlcNAc...) asparagine). Positions 294, 296, and 302 each coordinate Ca(2+). Asparagine 326 carries an N-linked (GlcNAc...) asparagine glycan. Position 354 (aspartate 354) interacts with Ca(2+). Asparagine 403, asparagine 573, asparagine 623, asparagine 652, and asparagine 693 each carry an N-linked (GlcNAc...) asparagine glycan. A helical membrane pass occupies residues 725–746 (IIAILLCIIILLTLVLMFVVWM). At 747-906 (KRRDKERQAK…LADMYGGSDD (160 aa)) the chain is on the cytoplasmic side. Disordered regions lie at residues 775 to 800 (EEGG…EPDT) and 863 to 884 (SGST…EQDY). Residues 776–785 (EGGGEEDQDY) show a composition bias toward acidic residues. A compositionally biased stretch (low complexity) spans 863–880 (SGSTAGSLSSLNSSSSGG).

Homodimer (via extracellular region). Can also form heterodimers with other cadherins (via extracellular region). Dimerization occurs in trans, i.e. with a cadherin chain from another cell.

It is found in the cell membrane. Its subcellular location is the sarcolemma. It localises to the cell junction. The protein localises to the cell surface. The protein resides in the desmosome. It is found in the adherens junction. In terms of biological role, calcium-dependent cell adhesion protein; preferentially mediates homotypic cell-cell adhesion. Cadherins may thus contribute to the sorting of heterogeneous cell types, and thereby play an important role during embryonic development. Required for proper neurite branching. Required for pre- and postsynaptic organization. This is Cadherin-2A (cdh2-a) from Xenopus laevis (African clawed frog).